A 147-amino-acid polypeptide reads, in one-letter code: Submaxillary gland androgen-regulated protein 3A (147 aa).

Residues 1–22 (MKPLNLVLGLCILVGCFLSCEC) form the signal peptide. Positions 27 to 128 (RRHDPRGPFP…ISITTPTARD (102 aa)) are disordered. The span at 33 to 105 (GPFPPPPPPH…PTPSIPPTGP (73 aa)) shows a compositional bias: pro residues. 3 tandem repeats follow at residues 43-54 (GPGIGRPHPPPF), 55-66 (GPGIGRPPPPPF), and 67-78 (GPGIGRPPPPPP). A 3 X 12 AA tandem repeats of G-P-G-I-G-R-P-[HP]-P-P-P-[PF] region spans residues 43–78 (GPGIGRPHPPPFGPGIGRPPPPPFGPGIGRPPPPPP). Over residues 108–127 (TVQATTMPAASISITTPTAR) the composition is skewed to polar residues.

This sequence belongs to the PROL1/PROL3 family. As to expression, secreted into saliva by submaxillary gland.

The protein localises to the secreted. Functionally, may play a role in protection or detoxification. This Mus musculus (Mouse) protein is Submaxillary gland androgen-regulated protein 3A (Smr3a).